The following is a 475-amino-acid chain: Pyruvate kinase (475 aa).

Arginine 36 contributes to the substrate binding site. Residues asparagine 38, serine 40, and aspartate 70 each coordinate K(+). 38–41 contacts ATP; sequence NFSH. The ATP site is built by arginine 77 and lysine 158. Residue glutamate 223 coordinates Mg(2+). Substrate is bound by residues glycine 246, aspartate 247, and threonine 279. A Mg(2+)-binding site is contributed by aspartate 247.

This sequence belongs to the pyruvate kinase family. Homotetramer. A divalent metal cation is required as a cofactor.

The catalysed reaction is pyruvate + ATP = phosphoenolpyruvate + ADP + H(+). Its pathway is carbohydrate degradation; glycolysis; pyruvate from D-glyceraldehyde 3-phosphate: step 5/5. The polypeptide is Pyruvate kinase (pki) (Thermococcus litoralis (strain ATCC 51850 / DSM 5473 / JCM 8560 / NS-C)).